The sequence spans 150 residues: Large ribosomal subunit protein bL9 (150 aa).

This sequence belongs to the bacterial ribosomal protein bL9 family.

Functionally, binds to the 23S rRNA. This is Large ribosomal subunit protein bL9 from Streptococcus equi subsp. zooepidemicus (strain MGCS10565).